The following is a 134-amino-acid chain: Ribosome-binding factor A (134 aa).

This sequence belongs to the RbfA family. As to quaternary structure, monomer. Binds 30S ribosomal subunits, but not 50S ribosomal subunits or 70S ribosomes.

Its subcellular location is the cytoplasm. One of several proteins that assist in the late maturation steps of the functional core of the 30S ribosomal subunit. Associates with free 30S ribosomal subunits (but not with 30S subunits that are part of 70S ribosomes or polysomes). Required for efficient processing of 16S rRNA. May interact with the 5'-terminal helix region of 16S rRNA. The polypeptide is Ribosome-binding factor A (Tolumonas auensis (strain DSM 9187 / NBRC 110442 / TA 4)).